A 347-amino-acid polypeptide reads, in one-letter code: NADH-ubiquinone oxidoreductase chain 2 (347 aa).

A run of 11 helical transmembrane segments spans residues Pro3–Ser23, His25–Met45, Tyr59–Leu79, Ile96–Pro116, Ile122–Leu142, Ile149–Gly169, Ile178–Pro198, Met201–Ile221, Ala237–Leu257, Glu274–Met294, and Met323–Ile343.

It belongs to the complex I subunit 2 family. In terms of assembly, core subunit of respiratory chain NADH dehydrogenase (Complex I) which is composed of 45 different subunits. Interacts with TMEM242.

Its subcellular location is the mitochondrion inner membrane. It carries out the reaction a ubiquinone + NADH + 5 H(+)(in) = a ubiquinol + NAD(+) + 4 H(+)(out). Functionally, core subunit of the mitochondrial membrane respiratory chain NADH dehydrogenase (Complex I) which catalyzes electron transfer from NADH through the respiratory chain, using ubiquinone as an electron acceptor. Essential for the catalytic activity and assembly of complex I. This chain is NADH-ubiquinone oxidoreductase chain 2, found in Civettictis civetta (African civet).